A 69-amino-acid chain; its full sequence is UPF0435 protein SH1076 (69 aa).

It belongs to the UPF0435 family.

The polypeptide is UPF0435 protein SH1076 (Staphylococcus haemolyticus (strain JCSC1435)).